The chain runs to 348 residues: Trace amine-associated receptor 9 (348 aa).

Topologically, residues 1–33 (MVNNFSQAEAVELCYKNVNESCIKTPYSPGPRS) are extracellular. N-linked (GlcNAc...) asparagine glycosylation is found at asparagine 4 and asparagine 19. 2 cysteine pairs are disulfide-bonded: cysteine 22/cysteine 186 and cysteine 105/cysteine 190. A helical transmembrane segment spans residues 34-58 (ILYAVLGFGAVLAAFGNLLVMIAIL). The Cytoplasmic segment spans residues 59–68 (HFKQLHTPTN). Residues 69–90 (FLIASLACADFLVGVTVMPFST) form a helical membrane-spanning segment. Over 91-105 (VRSVESCWYFGDSYC) the chain is Extracellular. The helical transmembrane segment at 106–128 (KFHTCFDTSFCFASLFHLCCISV) threads the bilayer. Residues aspartate 112 and threonine 113 each contribute to the spermidine site. Residues 129–148 (DRYIAVTDPLTYPTKFTVSV) are Cytoplasmic-facing. The helical transmembrane segment at 149-170 (SGICIVLSWFFSVTYSFSIFYT) threads the bilayer. Over 171–196 (GANEEGIEELVVALTCVGGCQAPLNQ) the chain is Extracellular. Residues 174 to 187 (EEGIEELVVALTCV) are extracellular Loop 2 (ECL2). The helical transmembrane segment at 197–218 (NWVLLCFLLFFIPNVAMVFIYS) threads the bilayer. The Cytoplasmic segment spans residues 219–256 (KIFLVAKHQARKIESTASQAQSSSESYKERVAKRERKA). Residues 257-280 (AKTLGIAMAAFLVSWLPYLVDAVI) form a helical membrane-spanning segment. Residues 281–293 (DAYMNFITPPYVY) are Extracellular-facing. Residues 294 to 314 (EILVWCVYYNSAMNPLIYAFF) traverse the membrane as a helical segment. Over 315–348 (YQWFGKAIKLIVSGKVLRTDSSTTNLFSEEVETD) the chain is Cytoplasmic.

It belongs to the G-protein coupled receptor 1 family.

The protein resides in the cell membrane. Its function is as follows. Olfactory receptor specific for trace amines, such as N,N-dimethylcyclohexylamine (DMCHA) and beta-phenylethylamine (beta-PEA). In contrast to mouse and rat orthologs, not activated by triethylamine, cadaverine (CAD) or spermidine. Trace amine compounds are enriched in animal body fluids and act on trace amine-associated receptors (TAARs) to elicit both intraspecific and interspecific innate behaviors. Trace amine-binding causes a conformation change that triggers signaling via G(s)-class of G alpha proteins (GNAL or GNAS). In mature olfactory sensory neurons, TAAR9 is coupled with GNAL/G(olf)G alpha protein and mediates activation of adenylate cyclase activity to activate cAMP signaling and eventually transmit odorant signals to achieve membrane depolarization. In immature olfactory sensory neurons, TAAR9 is coupled with GNAS/G(s) G alpha proteins. The chain is Trace amine-associated receptor 9 from Homo sapiens (Human).